The chain runs to 444 residues: MARTRNRFDRTPFQTAITDLSHDGRGVARRDGEGGKVTFISGALPGELVRAEPTARSRHFDEAKTVEVLEASPQRVAPRCPHFGVCAGCVLQHLEESQQIVAKQRVLMDNLERIGHVTPQAVLPALSGDNWGYRRKGRFSVRRVEKKAKTLVGFRELDPRFVADLSVCYTVIPQIGENIPLLAALVEGMDGKRDIPQIEFIAGDDAVALTIRHMQPLSARDQQAWIAFAQEHGFAIFLQPGGVDSVHPLWPQEVPLSFRLPQWDVDLAFRPLDFIQVNASLNQKMIVHALALLDAKPDDRVLDLFCGLGNFTLPLARVVREVVGVEGDAGLVARAKDNAQRNGLDNAQFYAADLTQDQRNAAWMRQGFDKLLLDPPRSGALEVLQQLPLKTFERIVYVSCHPGSLARDAGYLVNEQGFTLVSAGAMDMFPHTAHVESIAVFERR.

The TRAM domain maps to 5–67 (RNRFDRTPFQ…RHFDEAKTVE (63 aa)). Cys80, Cys86, Cys89, and Cys168 together coordinate [4Fe-4S] cluster. Residues Gln276, Phe305, Asn310, Glu326, Asp353, and Asp374 each contribute to the S-adenosyl-L-methionine site. The Nucleophile role is filled by Cys400.

It belongs to the class I-like SAM-binding methyltransferase superfamily. RNA M5U methyltransferase family. RlmD subfamily.

It catalyses the reaction uridine(1939) in 23S rRNA + S-adenosyl-L-methionine = 5-methyluridine(1939) in 23S rRNA + S-adenosyl-L-homocysteine + H(+). Its function is as follows. Catalyzes the formation of 5-methyl-uridine at position 1939 (m5U1939) in 23S rRNA. The polypeptide is 23S rRNA (uracil(1939)-C(5))-methyltransferase RlmD (Xanthomonas oryzae pv. oryzae (strain KACC10331 / KXO85)).